The primary structure comprises 422 residues: MLDMKFVRNNPAAVRDALARRGVSVALDEFYKLDEERREKLFIVEQMKNRRNVVSEEIGRLKKSGKDAPEMVLEMRDLSRQIKEIDEEIKELDGRLQDMLLNIPNIPHESVPEGAGAAENPVVRTWGKPRDFGFTPRPHWEIGEQLDIIDFERGGKVAGARFSFYKGYGARLERAVINFMLDLHTAEHGYVEIFPPFIVNRDSMVGTGQLPKFAEDMFKLEGAEYYLIPTAEVPVTNLYRNEILDGEKLPILHCAYSACFRAEAGAAGRDTRGLIRQHQFNKVELVKFCRPEDSYDELEKLTADAEKVLQKLGLPYRVVVLCTGDLGFSAAKTYDLEVWLPSYQEYKEISSCSNFADFQARRAGIRFRNARGKTEFVHTLNGSGLAVGRTVAAILENYQEADGSVTVPEALRPYMGGLSRIG.

230–232 contributes to the L-serine binding site; that stretch reads TAE. Position 261 to 263 (261 to 263) interacts with ATP; sequence RAE. E284 lines the L-serine pocket. 348 to 351 is a binding site for ATP; sequence EISS. Residue S383 participates in L-serine binding.

It belongs to the class-II aminoacyl-tRNA synthetase family. Type-1 seryl-tRNA synthetase subfamily. In terms of assembly, homodimer. The tRNA molecule binds across the dimer.

It is found in the cytoplasm. It catalyses the reaction tRNA(Ser) + L-serine + ATP = L-seryl-tRNA(Ser) + AMP + diphosphate + H(+). It carries out the reaction tRNA(Sec) + L-serine + ATP = L-seryl-tRNA(Sec) + AMP + diphosphate + H(+). The protein operates within aminoacyl-tRNA biosynthesis; selenocysteinyl-tRNA(Sec) biosynthesis; L-seryl-tRNA(Sec) from L-serine and tRNA(Sec): step 1/1. In terms of biological role, catalyzes the attachment of serine to tRNA(Ser). Is also able to aminoacylate tRNA(Sec) with serine, to form the misacylated tRNA L-seryl-tRNA(Sec), which will be further converted into selenocysteinyl-tRNA(Sec). This Pelotomaculum thermopropionicum (strain DSM 13744 / JCM 10971 / SI) protein is Serine--tRNA ligase.